We begin with the raw amino-acid sequence, 93 residues long: Bombyxin B-11 (93 aa).

The first 22 residues, 1-22 (MMKTAVMFILVVVISLTYSSEE), serve as a signal peptide directing secretion. Intrachain disulfides connect Cys30–Cys75, Cys42–Cys92, and Cys74–Cys79. The propeptide at 49-64 (GGAQYAPYWQETYLRS) is bombyxin B-11 C peptide.

This sequence belongs to the insulin family. In terms of assembly, heterodimer of a B chain and an A chain linked by two disulfide bonds.

The protein resides in the secreted. Its function is as follows. Brain peptide responsible for activation of prothoracic glands to produce ecdysone in insects. The polypeptide is Bombyxin B-11 (BBXB11) (Bombyx mori (Silk moth)).